A 190-amino-acid chain; its full sequence is Peptidyl-prolyl cis-trans isomerase A (190 aa).

The signal sequence occupies residues 1 to 24 (MLKSTLAAVAAVFALSALSPAALA). Residues 27–188 (GDPHVLLTTS…KPVVILSAKV (162 aa)) enclose the PPIase cyclophilin-type domain.

Belongs to the cyclophilin-type PPIase family.

Its subcellular location is the periplasm. The catalysed reaction is [protein]-peptidylproline (omega=180) = [protein]-peptidylproline (omega=0). Its function is as follows. PPIases accelerate the folding of proteins. It catalyzes the cis-trans isomerization of proline imidic peptide bonds in oligopeptides. This is Peptidyl-prolyl cis-trans isomerase A (ppiA) from Salmonella typhimurium (strain LT2 / SGSC1412 / ATCC 700720).